The chain runs to 620 residues: MIEVPEDNRSSQTKRKNTEKNCNELMVDEKMDDDSSPRDEMKDKLKGTKSLIIRKSELMAKKYDTWQLKAIFLFSAFICTFAYGLDSSIRGTYMTYAMNSYSAHSLISTVSVIVLMISAVSQVIFGGLSDIFGRLTLFLVSIVLYIVGTIIQSQAYDVQRYAAGAVFYYVGLVGVMLQVVLMLSDNSSLKWRLFYTLIPSWPSIITTWVSGSVVEAANPLENWSWNIAMWAFIFPLCCIPLILCMLHMRWKVRNDVEWKELQDEKSYYQTHGLVQMLVQLFWKLDVVGVLLFTAGVGCILVPLTLAGGVSTNWRNSKIIGPFVLGFVLVPGFIYWESRLALVPFAPFKLLKDRGVWAPLGIMFFICFVYQMAAGYLYTILVVAVDESASSATRIINLYSFVTAVVAPFLGLIVTRSSRLKSYIIFGGSLYFITMGLFYRYRSGQDADGGIIAGMVIWGLSSCLFDYPTIVSIQSVTSHENMATVTALNYTVFRIGGAVAAAISGAIWTQSLYPKLLHYMGDADLATAAYGSPLTFILSNPWGTPVRSAMVEAYRHVQKYEVIVALVFSAPMFLLTFCVRDPRLTEDFAQKLPDREYVQTKEDDPINDWIAKRFAKALGRS.

The interval Met-1–Lys-42 is disordered. A compositionally biased stretch (basic and acidic residues) spans Lys-16–Lys-42. Helical transmembrane passes span Ile-71–Tyr-93, Leu-106–Leu-128, Leu-135–Gln-152, Ala-162–Ser-184, Trp-191–Val-213, Trp-223–Met-245, Val-286–Gly-308, Ile-318–Trp-335, Val-355–Tyr-377, Thr-392–Thr-414, Ser-421–Tyr-438, Gly-448–Val-470, Val-491–Pro-513, and Val-561–Val-578.

It belongs to the major facilitator superfamily.

The protein localises to the endosome membrane. In terms of biological role, involved in the transport of siderophore triacestylfusarinine C and so has a role in iron homeostasis. In Saccharomyces cerevisiae (strain ATCC 204508 / S288c) (Baker's yeast), this protein is Siderophore iron transporter ARN2 (ARN2).